The following is an 81-amino-acid chain: Small ribosomal subunit protein bS16 (81 aa).

Belongs to the bacterial ribosomal protein bS16 family.

The chain is Small ribosomal subunit protein bS16 from Nautilia profundicola (strain ATCC BAA-1463 / DSM 18972 / AmH).